Here is a 409-residue protein sequence, read N- to C-terminus: 4-hydroxy-3-methylbut-2-en-1-yl diphosphate synthase (ferredoxin) (409 aa).

The segment covering 1–12 has biased composition (polar residues); it reads MQTLDRPNAPTQ. Residues 1–22 form a disordered region; that stretch reads MQTLDRPNAPTQQPYPEPVYPR. Residues Cys314, Cys317, Cys348, and Glu355 each contribute to the [4Fe-4S] cluster site.

This sequence belongs to the IspG family. [4Fe-4S] cluster serves as cofactor.

It catalyses the reaction (2E)-4-hydroxy-3-methylbut-2-enyl diphosphate + 2 oxidized [2Fe-2S]-[ferredoxin] + H2O = 2-C-methyl-D-erythritol 2,4-cyclic diphosphate + 2 reduced [2Fe-2S]-[ferredoxin] + H(+). The protein operates within isoprenoid biosynthesis; isopentenyl diphosphate biosynthesis via DXP pathway; isopentenyl diphosphate from 1-deoxy-D-xylulose 5-phosphate: step 5/6. Functionally, converts 2C-methyl-D-erythritol 2,4-cyclodiphosphate (ME-2,4cPP) into 1-hydroxy-2-methyl-2-(E)-butenyl 4-diphosphate. The polypeptide is 4-hydroxy-3-methylbut-2-en-1-yl diphosphate synthase (ferredoxin) (Synechococcus sp. (strain JA-2-3B'a(2-13)) (Cyanobacteria bacterium Yellowstone B-Prime)).